Here is a 177-residue protein sequence, read N- to C-terminus: Alkyl hydroperoxide reductase AhpD (177 aa).

The active-site Proton donor is C133. A disulfide bond links C133 and C136. C136 functions as the Cysteine sulfenic acid (-SOH) intermediate in the catalytic mechanism.

The protein belongs to the AhpD family.

The enzyme catalyses N(6)-[(R)-dihydrolipoyl]-L-lysyl-[lipoyl-carrier protein] + a hydroperoxide = N(6)-[(R)-lipoyl]-L-lysyl-[lipoyl-carrier protein] + an alcohol + H2O. Functionally, antioxidant protein with alkyl hydroperoxidase activity. Required for the reduction of the AhpC active site cysteine residues and for the regeneration of the AhpC enzyme activity. The sequence is that of Alkyl hydroperoxide reductase AhpD from Coxiella burnetii (strain CbuG_Q212) (Coxiella burnetii (strain Q212)).